Consider the following 494-residue polypeptide: Bifunctional NAD(P)H-hydrate repair enzyme Nnr (494 aa).

The tract at residues 1 to 221 (MDTIMPLPTH…GVEEVFAQHN (221 aa)) is NAD(P)H-hydrate epimerase. Residues 17–219 (LKQGEQDAAS…GLGVEEVFAQ (203 aa)) enclose the YjeF N-terminal domain. Residues 65 to 69 (NNGGD) form an NADPHX 1; for epimerase activity region. The K(+) site is built by Asn-66 and Asp-129. The tract at residues 133 to 139 (GIGLKEV) is NADPHX 1; for epimerase activity. Residue Asp-162 coordinates (6S)-NADPHX. Ser-165 contacts K(+). The region spanning 229–494 (DGKLRHSLLP…LLPHLRELLN (266 aa)) is the YjeF C-terminal domain. The segment at 229-494 (DGKLRHSLLP…LLPHLRELLN (266 aa)) is ADP-dependent (S)-NAD(P)H-hydrate dehydratase. Gly-325 is a binding site for (6S)-NADPHX. Residues 371–377 (HPVEAAR) are NADPHX 2; for dehydratase activity. Residues 408-412 (KGAGT) and 427-436 (NPGMASGGMG) contribute to the ADP site. Residue Asp-437 coordinates (6S)-NADPHX.

The protein in the N-terminal section; belongs to the NnrE/AIBP family. It in the C-terminal section; belongs to the NnrD/CARKD family. It depends on K(+) as a cofactor.

The enzyme catalyses (6S)-NADHX + ADP = AMP + phosphate + NADH + H(+). It carries out the reaction (6S)-NADPHX + ADP = AMP + phosphate + NADPH + H(+). It catalyses the reaction (6R)-NADHX = (6S)-NADHX. The catalysed reaction is (6R)-NADPHX = (6S)-NADPHX. In terms of biological role, bifunctional enzyme that catalyzes the epimerization of the S- and R-forms of NAD(P)HX and the dehydration of the S-form of NAD(P)HX at the expense of ADP, which is converted to AMP. This allows the repair of both epimers of NAD(P)HX, a damaged form of NAD(P)H that is a result of enzymatic or heat-dependent hydration. The chain is Bifunctional NAD(P)H-hydrate repair enzyme Nnr (nnr) from Vibrio cholerae serotype O1 (strain ATCC 39315 / El Tor Inaba N16961).